Here is a 125-residue protein sequence, read N- to C-terminus: Ino eighty subunit 5 (125 aa).

T124 carries the post-translational modification Phosphothreonine.

As to quaternary structure, component of the chromatin-remodeling INO80 complex, at least composed of ARP4, ARP5, ARP8, RVB1, RVB2, TAF14, NHP10, IES1, IES3, IES4, IES6, ACT1, IES2, IES5 and INO80.

It localises to the nucleus. This is Ino eighty subunit 5 (IES5) from Saccharomyces cerevisiae (strain ATCC 204508 / S288c) (Baker's yeast).